The primary structure comprises 263 residues: uncharacterized protein (263 aa).

Residue 13 to 20 coordinates NADP(+); it reads TGSTSGIG. Serine 141 serves as a coordination point for substrate. Tyrosine 154 acts as the Proton acceptor in catalysis.

Belongs to the short-chain dehydrogenases/reductases (SDR) family.

This is an uncharacterized protein from Bacillus subtilis (strain 168).